The following is a 299-amino-acid chain: ClpXP adapter protein SpxH (299 aa).

It belongs to the SpxH family. As to quaternary structure, interacts with Spx. Interacts with SpxO/YuzO.

The protein resides in the cytoplasm. Its activity is regulated as follows. Irreversible aggregation upon several stress conditions prevents interaction with Spx and therefore leads to Spx stabilization. Inhibited by interaction with SpxO/YuzO. Adapter protein required for efficient degradation of Spx by ClpXP under non-stress conditions. Interaction with Spx stabilizes Spx and exposes the C-terminus of Spx for recognition and proteolysis by ClpXP. Is specific for Spx and does not enhance proteolysis by ClpCP protease. Probably binds 2 zinc ions. The chain is ClpXP adapter protein SpxH from Bacillus subtilis (strain 168).